A 281-amino-acid polypeptide reads, in one-letter code: Pantothenate synthetase (281 aa).

Residue M30 to H37 participates in ATP binding. H37 acts as the Proton donor in catalysis. Residue Q61 coordinates (R)-pantoate. Residue Q61 coordinates beta-alanine. Position 147-150 (G147–D150) interacts with ATP. Q153 contributes to the (R)-pantoate binding site. ATP-binding positions include V176 and M184–R187.

The protein belongs to the pantothenate synthetase family. As to quaternary structure, homodimer.

Its subcellular location is the cytoplasm. The enzyme catalyses (R)-pantoate + beta-alanine + ATP = (R)-pantothenate + AMP + diphosphate + H(+). Its pathway is cofactor biosynthesis; (R)-pantothenate biosynthesis; (R)-pantothenate from (R)-pantoate and beta-alanine: step 1/1. Catalyzes the condensation of pantoate with beta-alanine in an ATP-dependent reaction via a pantoyl-adenylate intermediate. The polypeptide is Pantothenate synthetase (Heliobacterium modesticaldum (strain ATCC 51547 / Ice1)).